The sequence spans 311 residues: Probable lipid kinase YegS-like (311 aa).

The DAGKc domain occupies 9–140 (EHDGDTWLIL…VDVGTLGDDY (132 aa)). Residues threonine 47, 73-79 (GDGTVNE), and serine 102 each bind ATP. Residues lysine 221, aspartate 224, and leucine 226 each coordinate Mg(2+). The Proton acceptor role is filled by glutamate 281.

It belongs to the diacylglycerol/lipid kinase family. YegS lipid kinase subfamily. It depends on Mg(2+) as a cofactor. The cofactor is Ca(2+).

The protein localises to the cytoplasm. Probably phosphorylates lipids; the in vivo substrate is unknown. The polypeptide is Probable lipid kinase YegS-like (Chromohalobacter salexigens (strain ATCC BAA-138 / DSM 3043 / CIP 106854 / NCIMB 13768 / 1H11)).